A 329-amino-acid polypeptide reads, in one-letter code: Formimidoylglutamase (329 aa).

Mn(2+) is bound by residues His133, Asp159, His161, Asp163, Asp253, and Asp255.

The protein belongs to the arginase family. Requires Mn(2+) as cofactor.

The enzyme catalyses N-formimidoyl-L-glutamate + H2O = formamide + L-glutamate. It functions in the pathway amino-acid degradation; L-histidine degradation into L-glutamate; L-glutamate from N-formimidoyl-L-glutamate (hydrolase route): step 1/1. Catalyzes the conversion of N-formimidoyl-L-glutamate to L-glutamate and formamide. This is Formimidoylglutamase from Streptococcus gordonii (strain Challis / ATCC 35105 / BCRC 15272 / CH1 / DL1 / V288).